Here is a 251-residue protein sequence, read N- to C-terminus: Triosephosphate isomerase (251 aa).

9–11 provides a ligand contact to substrate; that stretch reads NWK. His95 functions as the Electrophile in the catalytic mechanism. The active-site Proton acceptor is the Glu167. Residues Gly173, Ser213, and 234 to 235 contribute to the substrate site; that span reads GG. Phosphoserine is present on Ser213.

This sequence belongs to the triosephosphate isomerase family. In terms of assembly, homodimer.

Its subcellular location is the cytoplasm. The enzyme catalyses D-glyceraldehyde 3-phosphate = dihydroxyacetone phosphate. Its pathway is carbohydrate biosynthesis; gluconeogenesis. The protein operates within carbohydrate degradation; glycolysis; D-glyceraldehyde 3-phosphate from glycerone phosphate: step 1/1. In terms of biological role, involved in the gluconeogenesis. Catalyzes stereospecifically the conversion of dihydroxyacetone phosphate (DHAP) to D-glyceraldehyde-3-phosphate (G3P). The sequence is that of Triosephosphate isomerase from Bacillus cereus (strain AH820).